We begin with the raw amino-acid sequence, 513 residues long: Serine/threonine protein phosphatase 2A 55 kDa regulatory subunit B alpha isoform (513 aa).

Residue Met-1 is modified to N-acetylmethionine. WD repeat units lie at residues 36-75 (QEVDIISAIEFDNSGNHLATGDRGGRVVLFERTDTNNSSG), 112-153 (EIEE…IKKI), 232-270 (AHDYHINSISNNSDGETFISADDLRINLWNLEISNQSFN), 281-321 (DLSE…LCDS), 340-378 (EIIASVSDIKFAKEGRYLLSRDYMTLKLWDINMDAGPVA), and 483-513 (DYTTKLLHLAWHPNENSIACAAANSLYMYYA).

Belongs to the phosphatase 2A regulatory subunit B family. As to quaternary structure, PP2A consists of a common heteromeric enzyme, composed of a catalytic subunit (subunits C), a constant regulatory subunit (subunit A), and a variety of regulatory subunits such as subunits B (the R2/B/PR55/B55, R3/B''/PR72/PR130/PR59 and R5/B'/B56 families). Interacts with SIC/RON3. As to expression, expressed ubiquitously.

The B regulatory subunit may modulate substrate selectivity and catalytic activity, and may also direct the localization of the catalytic enzyme to a particular subcellular compartment. This is Serine/threonine protein phosphatase 2A 55 kDa regulatory subunit B alpha isoform (PP2AB1) from Arabidopsis thaliana (Mouse-ear cress).